Reading from the N-terminus, the 346-residue chain is tRNA (guanine-N(7)-)-methyltransferase (346 aa).

Residues Gly-101 and 124–125 (EI) each bind S-adenosyl-L-methionine. The interval 149-191 (LKSAGGGGSDAAPESPAAPPTPSEAASPDSTTPSEQQAPTTLV) is disordered. Residues 171–182 (SEAASPDSTTPS) show a composition bias toward low complexity. S-adenosyl-L-methionine-binding positions include 204 to 205 (NT) and Cys-224. Asp-227 is a catalytic residue. 318 to 320 (TEE) lines the S-adenosyl-L-methionine pocket.

Belongs to the class I-like SAM-binding methyltransferase superfamily. TrmB family. As to quaternary structure, forms a complex with trm82.

It localises to the nucleus. The catalysed reaction is guanosine(46) in tRNA + S-adenosyl-L-methionine = N(7)-methylguanosine(46) in tRNA + S-adenosyl-L-homocysteine. Its pathway is tRNA modification; N(7)-methylguanine-tRNA biosynthesis. Catalyzes the formation of N(7)-methylguanine at position 46 (m7G46) in tRNA. The protein is tRNA (guanine-N(7)-)-methyltransferase (trm8) of Aspergillus terreus (strain NIH 2624 / FGSC A1156).